A 140-amino-acid chain; its full sequence is UPF0251 protein Athe_2281 (140 aa).

Belongs to the UPF0251 family.

The sequence is that of UPF0251 protein Athe_2281 from Caldicellulosiruptor bescii (strain ATCC BAA-1888 / DSM 6725 / KCTC 15123 / Z-1320) (Anaerocellum thermophilum).